Consider the following 271-residue polypeptide: tRNA pseudouridine synthase A (271 aa).

Residue Asp56 is the Nucleophile of the active site. A substrate-binding site is contributed by Tyr120.

Belongs to the tRNA pseudouridine synthase TruA family. Homodimer.

The enzyme catalyses uridine(38/39/40) in tRNA = pseudouridine(38/39/40) in tRNA. Formation of pseudouridine at positions 38, 39 and 40 in the anticodon stem and loop of transfer RNAs. This Janthinobacterium sp. (strain Marseille) (Minibacterium massiliensis) protein is tRNA pseudouridine synthase A.